We begin with the raw amino-acid sequence, 143 residues long: Actin-depolymerizing factor (143 aa).

The ADF-H domain maps to 11–143 (GMGVADHSKN…DLEVLRERAH (133 aa)).

It belongs to the actin-binding proteins ADF family.

Functionally, actin-depolymerizing protein. Severs actin filaments (F-actin) and binds to actin monomers. In Vitis vinifera (Grape), this protein is Actin-depolymerizing factor.